The chain runs to 66 residues: MPKLKTRKSARKRFYISAKGKFVRKRAFKSHILEKKTSKRKRNLKRKMIVFKGENLALKTMLPYLR.

It belongs to the bacterial ribosomal protein bL35 family.

It localises to the plastid. It is found in the chloroplast. This chain is Large ribosomal subunit protein bL35c, found in Guillardia theta (Cryptophyte).